The sequence spans 308 residues: D-alanine--D-alanine ligase B (308 aa).

In terms of domain architecture, ATP-grasp spans 102–302; the sequence is KKVAAAAGVV…FAELLSWMVE (201 aa). 128 to 183 contributes to the ATP binding site; that stretch reads PMKPPYVVKPVREGSSFGVVIVKEDQPHPPQVIGSADWKYGDEVMVEGYIAGRELT. Residues Asp252, Glu269, and Asn271 each coordinate Mg(2+).

This sequence belongs to the D-alanine--D-alanine ligase family. The cofactor is Mg(2+). Mn(2+) is required as a cofactor.

The protein localises to the cytoplasm. It catalyses the reaction 2 D-alanine + ATP = D-alanyl-D-alanine + ADP + phosphate + H(+). It functions in the pathway cell wall biogenesis; peptidoglycan biosynthesis. In terms of biological role, cell wall formation. The polypeptide is D-alanine--D-alanine ligase B (Brucella suis biovar 1 (strain 1330)).